The primary structure comprises 113 residues: U-scoloptoxin(16)-Sa1a (113 aa).

The first 29 residues, 1 to 29 (MAPPSNPLFVVLCWALFAYLMLVLRDIQA), serve as a signal peptide directing secretion.

Belongs to the scoloptoxin-16 family. Post-translationally, contains 4 disulfide bonds. As to expression, expressed by the venom gland.

The protein resides in the secreted. The sequence is that of U-scoloptoxin(16)-Sa1a from Scolopendra alternans (Florida Keys giant centipede).